Here is a 907-residue protein sequence, read N- to C-terminus: Protein translocase subunit SecA (907 aa).

ATP contacts are provided by residues Gln-86, 104–108 (GEGKT), and Asp-511. Basic and acidic residues-rich tracts occupy residues 838-856 (AQEE…HESV) and 869-888 (EEAP…KRND). Positions 838–907 (AQEEWKESMS…YKQCHGKVVD (70 aa)) are disordered. Residues Cys-890, Cys-892, Cys-901, and His-902 each coordinate Zn(2+). Over residues 896 to 907 (KKYKQCHGKVVD) the composition is skewed to basic residues.

Belongs to the SecA family. Monomer and homodimer. Part of the essential Sec protein translocation apparatus which comprises SecA, SecYEG and auxiliary proteins SecDF-YajC and YidC. Zn(2+) serves as cofactor.

The protein resides in the cell inner membrane. Its subcellular location is the cytoplasm. It carries out the reaction ATP + H2O + cellular proteinSide 1 = ADP + phosphate + cellular proteinSide 2.. Its function is as follows. Part of the Sec protein translocase complex. Interacts with the SecYEG preprotein conducting channel. Has a central role in coupling the hydrolysis of ATP to the transfer of proteins into and across the cell membrane, serving both as a receptor for the preprotein-SecB complex and as an ATP-driven molecular motor driving the stepwise translocation of polypeptide chains across the membrane. This Francisella philomiragia subsp. philomiragia (strain ATCC 25017 / CCUG 19701 / FSC 153 / O#319-036) protein is Protein translocase subunit SecA.